Here is an 812-residue protein sequence, read N- to C-terminus: Probable E3 ubiquitin-protein ligase hulA (812 aa).

Residues 1-109 (MTCSQPNLRV…QMGGDEMLTR (109 aa)) enclose the C2 domain. 2 disordered regions span residues 131–235 (NLST…WERR) and 250–350 (RTTT…YFVD). Composition is skewed to polar residues over residues 148-165 (MQPS…ASTP), 174-199 (ADPT…STIV), 214-223 (SRTNLSSFED), and 250-267 (RTTT…QTSR). Residues 226–259 (GRLPAGWERREDNLGRTYYVDHNTRTTTWTRPSN) enclose the WW 1 domain. Basic and acidic residues predominate over residues 276–291 (LERRAHQSRMLPEDRT). The segment covering 292-306 (GASSPNLQENQQQAQ) has biased composition (polar residues). Low complexity predominate over residues 307-330 (TPPAGGSASAVSMMATGATTAGTG). 2 WW domains span residues 330–363 (GELP…DPRR) and 390–423 (GPLP…DPRL). Positions 479–812 (SASDLKKRLM…VEETLGFGQE (334 aa)) constitute an HECT domain. Cys-780 acts as the Glycyl thioester intermediate in catalysis.

It belongs to the RSP5/NEDD4 family. Interacts with creD.

The protein localises to the cytoplasm. The enzyme catalyses S-ubiquitinyl-[E2 ubiquitin-conjugating enzyme]-L-cysteine + [acceptor protein]-L-lysine = [E2 ubiquitin-conjugating enzyme]-L-cysteine + N(6)-ubiquitinyl-[acceptor protein]-L-lysine.. Its pathway is protein modification; protein ubiquitination. E3 ubiquitin-protein ligase which accepts ubiquitin from an E2 ubiquitin-conjugating enzyme in the form of a thioester and then directly transfers the ubiquitin to targeted substrates. Probably involved in the regulatory network controlling carbon source utilization. This Aspergillus flavus (strain ATCC 200026 / FGSC A1120 / IAM 13836 / NRRL 3357 / JCM 12722 / SRRC 167) protein is Probable E3 ubiquitin-protein ligase hulA (hulA).